The following is a 327-amino-acid chain: L-lactate dehydrogenase 1 (327 aa).

NAD(+) contacts are provided by residues Val-21, Asp-42, Lys-47, Tyr-72, and 86-87 (GA). Substrate is bound by residues Gln-89, Arg-95, and 127-130 (NPVD). Residues 125–127 (AAN) and Ser-150 each bind NAD(+). 155–158 (DSAR) lines the substrate pocket. Residues Arg-160 and His-175 each coordinate beta-D-fructose 1,6-bisphosphate. His-182 serves as the catalytic Proton acceptor. Tyr-227 bears the Phosphotyrosine mark. Substrate is bound at residue Thr-236.

This sequence belongs to the LDH/MDH superfamily. LDH family. As to quaternary structure, homotetramer.

The protein resides in the cytoplasm. It catalyses the reaction (S)-lactate + NAD(+) = pyruvate + NADH + H(+). The protein operates within fermentation; pyruvate fermentation to lactate; (S)-lactate from pyruvate: step 1/1. Allosterically activated by fructose 1,6-bisphosphate (FBP). Its function is as follows. Catalyzes the conversion of lactate to pyruvate. This chain is L-lactate dehydrogenase 1, found in Enterococcus faecalis (strain ATCC 700802 / V583).